The primary structure comprises 345 residues: Uroporphyrinogen decarboxylase (345 aa).

Residues 23 to 27 (RQAGR), D73, Y149, T203, and H319 contribute to the substrate site.

The protein belongs to the uroporphyrinogen decarboxylase family. As to quaternary structure, homodimer.

The protein localises to the cytoplasm. It carries out the reaction uroporphyrinogen III + 4 H(+) = coproporphyrinogen III + 4 CO2. The protein operates within porphyrin-containing compound metabolism; protoporphyrin-IX biosynthesis; coproporphyrinogen-III from 5-aminolevulinate: step 4/4. In terms of biological role, catalyzes the decarboxylation of four acetate groups of uroporphyrinogen-III to yield coproporphyrinogen-III. This is Uroporphyrinogen decarboxylase from Vesicomyosocius okutanii subsp. Calyptogena okutanii (strain HA).